We begin with the raw amino-acid sequence, 118 residues long: UPF0295 protein BC_0520 (118 aa).

2 consecutive transmembrane segments (helical) span residues 12–32 and 43–63; these read IRTF…LGVF and FMMV…WIGM.

Belongs to the UPF0295 family.

Its subcellular location is the cell membrane. The polypeptide is UPF0295 protein BC_0520 (Bacillus cereus (strain ATCC 14579 / DSM 31 / CCUG 7414 / JCM 2152 / NBRC 15305 / NCIMB 9373 / NCTC 2599 / NRRL B-3711)).